The chain runs to 121 residues: uncharacterized protein (121 aa).

3 helical membrane passes run valine 2–isoleucine 22, phenylalanine 42–phenylalanine 62, and isoleucine 89–phenylalanine 109.

The protein resides in the membrane. This is an uncharacterized protein from Saccharomyces cerevisiae (strain ATCC 204508 / S288c) (Baker's yeast).